We begin with the raw amino-acid sequence, 299 residues long: ATP phosphoribosyltransferase (299 aa).

Belongs to the ATP phosphoribosyltransferase family. Long subfamily. As to quaternary structure, equilibrium between an active dimeric form, an inactive hexameric form and higher aggregates. Interconversion between the various forms is largely reversible and is influenced by the natural substrates and inhibitors of the enzyme. Mg(2+) is required as a cofactor.

It localises to the cytoplasm. The catalysed reaction is 1-(5-phospho-beta-D-ribosyl)-ATP + diphosphate = 5-phospho-alpha-D-ribose 1-diphosphate + ATP. The protein operates within amino-acid biosynthesis; L-histidine biosynthesis; L-histidine from 5-phospho-alpha-D-ribose 1-diphosphate: step 1/9. Feedback inhibited by histidine. Its function is as follows. Catalyzes the condensation of ATP and 5-phosphoribose 1-diphosphate to form N'-(5'-phosphoribosyl)-ATP (PR-ATP). Has a crucial role in the pathway because the rate of histidine biosynthesis seems to be controlled primarily by regulation of HisG enzymatic activity. The protein is ATP phosphoribosyltransferase of Pectobacterium atrosepticum (strain SCRI 1043 / ATCC BAA-672) (Erwinia carotovora subsp. atroseptica).